We begin with the raw amino-acid sequence, 911 residues long: ATP-dependent DNA helicase Q-like 5 (911 aa).

The tract at residues 1–84 (MDFDSDSDGS…PPPSPLFTNL (84 aa)) is disordered. Residues 20 to 48 (SFPSSPPQLQSPAKHVPPVSRKMTSSSSR) are compositionally biased toward low complexity. The segment covering 54–79 (PTHPPPNPSQEAPVPSPYPPPPPPSP) has biased composition (pro residues). Residues 278 to 448 (IKMILGGSST…MSSLEIPSTN (171 aa)) form the Helicase ATP-binding domain. Position 291–298 (291–298 (LPTGAGKS)) interacts with ATP. The DEAH box signature appears at 390-393 (DEAH). The Helicase C-terminal domain occupies 470 to 628 (RMKDLLILME…VFSTETKQHE (159 aa)).

The protein belongs to the helicase family. RecQ subfamily. In terms of tissue distribution, mostly expressed in roots, seedlings, shoots, shoot apical mersitem, flowers, and siliques.

Its subcellular location is the nucleus. It catalyses the reaction Couples ATP hydrolysis with the unwinding of duplex DNA by translocating in the 3'-5' direction.. The enzyme catalyses ATP + H2O = ADP + phosphate + H(+). Functionally, 3'-5' DNA helicase that may play a role in the repair of DNA. The polypeptide is ATP-dependent DNA helicase Q-like 5 (RECQL5) (Arabidopsis thaliana (Mouse-ear cress)).